We begin with the raw amino-acid sequence, 193 residues long: Shikimate kinase (193 aa).

31–36 (GVGKTT) contacts ATP. Residue threonine 35 coordinates Mg(2+). Substrate is bound by residues aspartate 53, arginine 77, and glycine 103. Arginine 141 is a binding site for ATP. Arginine 160 lines the substrate pocket. Glutamine 176 lines the ATP pocket.

It belongs to the shikimate kinase family. In terms of assembly, monomer. Mg(2+) is required as a cofactor.

It is found in the cytoplasm. It catalyses the reaction shikimate + ATP = 3-phosphoshikimate + ADP + H(+). It functions in the pathway metabolic intermediate biosynthesis; chorismate biosynthesis; chorismate from D-erythrose 4-phosphate and phosphoenolpyruvate: step 5/7. Functionally, catalyzes the specific phosphorylation of the 3-hydroxyl group of shikimic acid using ATP as a cosubstrate. The protein is Shikimate kinase of Novosphingobium aromaticivorans (strain ATCC 700278 / DSM 12444 / CCUG 56034 / CIP 105152 / NBRC 16084 / F199).